Reading from the N-terminus, the 60-residue chain is Putative insect toxin Acra6 (60 aa).

One can recognise an LCN-type CS-alpha/beta domain in the interval 2-60; it reads RDGYIRRKDEFKFKCYVDGKDCDDVCKSEGGSAGYCTALGFLCYCAGLPDDKAWKPTSS. 3 cysteine pairs are disulfide-bonded: Cys-16–Cys-37, Cys-23–Cys-44, and Cys-27–Cys-46.

Belongs to the long (4 C-C) scorpion toxin superfamily. Sodium channel inhibitor family. Beta subfamily. As to expression, expressed by the venom gland.

The protein localises to the secreted. Functionally, depressant insect toxins cause a transient contraction paralysis followed by a slow flaccid paralysis. They bind voltage-independently to sodium channels (Nav) and block action potentials, primarily by depolarizing the axonal membrane and suppressing the sodium current. The sequence is that of Putative insect toxin Acra6 from Androctonus crassicauda (Arabian fat-tailed scorpion).